We begin with the raw amino-acid sequence, 264 residues long: NAD-capped RNA hydrolase NudC (264 aa).

Position 70 (arginine 70) interacts with substrate. Zn(2+)-binding residues include cysteine 99 and cysteine 102. Glutamate 112 is a substrate binding site. Residues cysteine 117 and cysteine 120 each coordinate Zn(2+). A substrate-binding site is contributed by tyrosine 125. The Nudix hydrolase domain occupies 126–253; that stretch reads PVICPSIIVA…TIARKLIHVT (128 aa). A divalent metal cation is bound by residues alanine 162, glutamate 178, and glutamate 182. A Nudix box motif is present at residues 163–184; it reads GFVEVGETFEQAVQREVFEETG. 196 to 203 contributes to the substrate binding site; the sequence is QPWAFPNS. Glutamate 223 lines the a divalent metal cation pocket. Alanine 246 provides a ligand contact to substrate.

This sequence belongs to the Nudix hydrolase family. NudC subfamily. As to quaternary structure, homodimer. Mg(2+) is required as a cofactor. Mn(2+) serves as cofactor. The cofactor is Zn(2+).

It carries out the reaction a 5'-end NAD(+)-phospho-ribonucleoside in mRNA + H2O = a 5'-end phospho-adenosine-phospho-ribonucleoside in mRNA + beta-nicotinamide D-ribonucleotide + 2 H(+). The enzyme catalyses NAD(+) + H2O = beta-nicotinamide D-ribonucleotide + AMP + 2 H(+). The catalysed reaction is NADH + H2O = reduced beta-nicotinamide D-ribonucleotide + AMP + 2 H(+). Its function is as follows. mRNA decapping enzyme that specifically removes the nicotinamide adenine dinucleotide (NAD) cap from a subset of mRNAs by hydrolyzing the diphosphate linkage to produce nicotinamide mononucleotide (NMN) and 5' monophosphate mRNA. The NAD-cap is present at the 5'-end of some mRNAs and stabilizes RNA against 5'-processing. Has preference for mRNAs with a 5'-end purine. Catalyzes the hydrolysis of a broad range of dinucleotide pyrophosphates. This chain is NAD-capped RNA hydrolase NudC, found in Haemophilus influenzae (strain 86-028NP).